The sequence spans 357 residues: DNA replication and repair protein RecF (357 aa).

30-37 provides a ligand contact to ATP; the sequence is GANGSGKT.

It belongs to the RecF family.

It localises to the cytoplasm. Its function is as follows. The RecF protein is involved in DNA metabolism; it is required for DNA replication and normal SOS inducibility. RecF binds preferentially to single-stranded, linear DNA. It also seems to bind ATP. This is DNA replication and repair protein RecF from Escherichia coli O139:H28 (strain E24377A / ETEC).